The sequence spans 682 residues: Pneumocandin biosynthesis cluster protein B (682 aa).

Positions 63–73 (SSLSSTEVTSS) are enriched in low complexity. Disordered stretches follow at residues 63-86 (SSLSSTEVTSSPNASPLYNTDAPE), 107-129 (QNTPSITGGTASAEYQNSGDTNQ), and 251-358 (SEST…SPAN). 2 stretches are compositionally biased toward polar residues: residues 257–279 (NTGSANSLNSGLLANTPSSSHSS) and 310–320 (PRQTTEATPCD). Over residues 335–349 (PERRSMKMVRKEARD) the composition is skewed to basic and acidic residues.

Functionally, part of the gene cluster that mediates the biosynthesis of pneumocandins, lipohexapeptides of the echinocandin family that prevent fungal cell wall formation by non-competitive inhibition of beta-1,3-glucan synthase. The 10,12-dimethylmyristoyl side chain is synthesized by the reducing polyketide synthase gloL/GLPKS4. The thioesterase gloN/GLHYD exclusively interacts with gloL/GLPKS4 to maintain turnover of the polyketide side chain. The 10R,12S-dimethylmyristic acid is then transferred to the first thiolation domain of the nonribosomal peptide synthetase gloA/GLNRPS4 by the acyl-AMP ligase gloD/GLligase, followed by its acylation to L-ornithine to trigger elongation of the cyclic hexapeptide. L-ornithine, 4R-hydroxyl-L-proline (generated from L-proline by the dioxygenase gloF/GLOXY2), 3S-hydroxyl-L-homotyrosine (generated by gloG/GLHtyB, gloH/GLHtyA, gloI/GLHtyC, gloJ/GLHtyD and hydroxylated at C-3 by the dioxygenase gloM/GLOXY1), 3R-hydroxyl-L-glutamine (generated from L-glutamine probably by the dioxygenase gloE/GLOXY3) and 3S-hydroxyl-L-proline (generated from L-proline by the dioxygenase gloF/GLOXY2 to yield pneumocandin B0), or 3S-hydroxyl-4S-methyl-L-proline (generated from L-leucine by the dioxygenase gloC/GLOXY4 to yield pneumocandin A0) are sequentially added to the growing chain. The last C domain of gloA/GLNRPS4 is proposed to be responsible for cyclization by condensation to form the peptide bond between L-ornithine and 3S-hydroxyl-4S-methyl-L-proline (for pneumocandin A0) or 3S-hydroxyl-L-proline (for pneumocandin B0). Finally, the subsequent C-4 hydroxylation of 3S-hydroxyl-L-homotyrosine and L-ornithine dihydroxylation at C-4 and C-5 are performed by the cytochrome P450 monooxygenases gloP/GLP450-1 and gloO/GLP450-2, respectively. This Glarea lozoyensis (strain ATCC 20868 / MF5171) protein is Pneumocandin biosynthesis cluster protein B.